The following is a 507-amino-acid chain: F-box only protein 31 (507 aa).

The disordered stretch occupies residues R19–E42. S33 bears the Phosphoserine mark. The segment covering S33–E42 has biased composition (acidic residues). A Phosphothreonine modification is found at T37. Positions R50 to E55 match the D box motif. The 47-residue stretch at R50 to R96 folds into the F-box domain. Zn(2+) is bound by residues C192, H200, C216, and H222. S264 is subject to Phosphoserine; by ATM. The short motif at D283–L285 is the DDL motif element. A disordered region spans residues E366–P417. Residues E400–Q412 are compositionally biased toward low complexity. Phosphoserine is present on S448.

This sequence belongs to the FBXO31 family. Part of a SCF (SKP1-cullin-F-box) protein ligase complex SCF(FBXO31) composed of CUL1, SKP1, RBX1 and FBXO31. Interacts (when phosphorylated at Ser-33) with CDC20, promoting ubiquitination by the APC/C complex. Post-translationally, phosphorylation at Ser-264 by ATM following gamma-irradiation results in its stabilization. Phosphorylation at Ser-448 in absence of stress promotes its ubiquitination and degradation by the SCF(FBXO46) complex. Phosphorylation at Ser-33 by AKT1 promotes association with CDC20 and ubiquitination by the APC/C complex. In terms of processing, ubiquitinated by the SCF(FBXO46) complex in absence of stress, promoting its degradation. Ubiquitinated by the APC/C complex following phosphorylation at Ser-33, leading to its degradation by the proteasome.

It localises to the cytoplasm. The protein localises to the cytoskeleton. Its subcellular location is the microtubule organizing center. It is found in the centrosome. It functions in the pathway protein modification; protein ubiquitination. In terms of biological role, substrate-recognition component of the SCF(FBXO31) protein ligase complex, which specifically mediates the ubiquitination of proteins amidated at their C-terminus in response to oxidative stress, leading to their degradation by the proteasome. FBXO31 specifically recognizes and binds C-terminal peptides bearing an amide: C-terminal amidation in response to oxidative stress takes place following protein fragmentation. The SCF(FBXO31) also plays a role in G1 arrest following DNA damage by mediating ubiquitination of phosphorylated cyclin-D1 (CCND1), promoting its degradation by the proteasome, resulting in G1 arrest. The SCF(FBXO31) complex is however not a major regulator of CCND1 stability during the G1/S transition. In response to genotoxic stress, the SCF(FBXO31) complex directs ubiquitination and degradation of phosphorylated MDM2, thereby promoting p53/TP53-mediated DNA damage response. SCF(FBXO31) complex is required for genomic integrity by catalyzing ubiquitination and degradation of cyclin-A (CCNA1 and/or CCNA2) during the G1 phase. In response to genotoxic stress, the SCF(FBXO31) complex directs ubiquitination and degradation of phosphorylated FBXO46 and MAP2K6. SCF(FBXO31) complex promotes ubiquitination and degradation of CDT1 during the G2 phase to prevent re-replication. The SCF(FBXO31) complex also mediates ubiquitination and degradation of DUSP6, OGT and PARD6A. The polypeptide is F-box only protein 31 (Mus musculus (Mouse)).